A 192-amino-acid chain; its full sequence is Cell division protein SepF (192 aa).

The disordered stretch occupies residues 15-70 (GDPLEYEEDGEEYEQVYREENKREEARRATAGTAAAATPTAAAQASDAAPMGSGPA). Residues 18–28 (LEYEEDGEEYE) are compositionally biased toward acidic residues. A compositionally biased stretch (basic and acidic residues) spans 29–42 (QVYREENKREEARR). Residues 43–63 (ATAGTAAAATPTAAAQASDAA) are compositionally biased toward low complexity.

The protein belongs to the SepF family. As to quaternary structure, homodimer. Interacts with FtsZ.

The protein localises to the cytoplasm. In terms of biological role, cell division protein that is part of the divisome complex and is recruited early to the Z-ring. Probably stimulates Z-ring formation, perhaps through the cross-linking of FtsZ protofilaments. Its function overlaps with FtsA. This is Cell division protein SepF from Gloeobacter violaceus (strain ATCC 29082 / PCC 7421).